Here is a 375-residue protein sequence, read N- to C-terminus: Protein RecA (375 aa).

Residue glycine 75–threonine 82 participates in ATP binding. The segment at glycine 339 to asparagine 375 is disordered. Residues glutamine 348–aspartate 358 show a composition bias toward acidic residues.

It belongs to the RecA family.

It is found in the cytoplasm. Can catalyze the hydrolysis of ATP in the presence of single-stranded DNA, the ATP-dependent uptake of single-stranded DNA by duplex DNA, and the ATP-dependent hybridization of homologous single-stranded DNAs. It interacts with LexA causing its activation and leading to its autocatalytic cleavage. This chain is Protein RecA, found in Corynebacterium jeikeium (strain K411).